The chain runs to 530 residues: Autoinducer-2 kinase (530 aa).

It belongs to the FGGY kinase family.

The protein localises to the cytoplasm. It carries out the reaction (S)-4,5-dihydroxypentane-2,3-dione + ATP = (2S)-2-hydroxy-3,4-dioxopentyl phosphate + ADP + H(+). Catalyzes the phosphorylation of autoinducer-2 (AI-2) to phospho-AI-2, which subsequently inactivates the transcriptional regulator LsrR and leads to the transcription of the lsr operon. Phosphorylates the ring-open form of (S)-4,5-dihydroxypentane-2,3-dione (DPD), which is the precursor to all AI-2 signaling molecules, at the C5 position. This Salmonella typhimurium (strain LT2 / SGSC1412 / ATCC 700720) protein is Autoinducer-2 kinase.